The primary structure comprises 463 residues: ATP synthase subunit beta (463 aa).

152–159 (GGAGVGKT) serves as a coordination point for ATP.

This sequence belongs to the ATPase alpha/beta chains family. In terms of assembly, F-type ATPases have 2 components, CF(1) - the catalytic core - and CF(0) - the membrane proton channel. CF(1) has five subunits: alpha(3), beta(3), gamma(1), delta(1), epsilon(1). CF(0) has three main subunits: a(1), b(2) and c(9-12). The alpha and beta chains form an alternating ring which encloses part of the gamma chain. CF(1) is attached to CF(0) by a central stalk formed by the gamma and epsilon chains, while a peripheral stalk is formed by the delta and b chains.

It localises to the cell inner membrane. It carries out the reaction ATP + H2O + 4 H(+)(in) = ADP + phosphate + 5 H(+)(out). In terms of biological role, produces ATP from ADP in the presence of a proton gradient across the membrane. The catalytic sites are hosted primarily by the beta subunits. This chain is ATP synthase subunit beta, found in Shewanella denitrificans (strain OS217 / ATCC BAA-1090 / DSM 15013).